We begin with the raw amino-acid sequence, 318 residues long: Peroxisomal targeting signal 2 receptor (318 aa).

6 WD repeats span residues Asp-60–Asp-91, Glu-104–Asp-136, Gly-148–Asp-179, Ala-191–Asp-222, Gly-235–Asn-266, and His-279–Asp-310.

This sequence belongs to the WD repeat peroxin-7 family. In terms of assembly, interacts with PEX5; interaction only takes place when PEX7 is associated with cargo proteins. Interacts with VWA8.

Its subcellular location is the cytoplasm. It localises to the cytosol. The protein localises to the peroxisome matrix. Functionally, receptor required for the peroxisomal import of proteins containing a C-terminal PTS2-type peroxisomal targeting signal. Specifically binds to cargo proteins containing a PTS2 peroxisomal targeting signal in the cytosol. Cargo protein-binding triggers interaction with PEX5 and formation of a ternary complex composed of PEX5 and PEX7 along with PTS2-containing cargo proteins, which is tranlocated into peroxisomes by passing through the PEX13-PEX14 docking complex. This is Peroxisomal targeting signal 2 receptor from Mus musculus (Mouse).